A 1023-amino-acid chain; its full sequence is Peroxisome proliferator-activated receptor gamma coactivator 1-beta (1023 aa).

Residues 1-91 form an abolishes DNA transcriptional activity when missing region; that stretch reads MAGNDCGALL…LFQIDSENEA (91 aa). The disordered stretch occupies residues 122-148; sequence LSCTSASPAPSSAPPSPAPEKPSAPAP. The segment covering 132–146 has biased composition (pro residues); it reads SSAPPSPAPEKPSAP. An LXXLL motif 1 motif is present at residues 156 to 160; that stretch reads LQKLL. Disordered stretches follow at residues 165–210, 237–278, and 302–331; these read YPTS…QSQS, LQSP…PGAP, and RKLPPQTPEPLPKACSNPSQQVRSRPWSRH. The LXXLL motif 2 motif lies at 343-347; it reads LRELL. Disordered stretches follow at residues 369-463, 520-567, 601-623, and 636-683; these read LTPR…LPWT, RELG…QLPP, TAGLTPPTTPPYKPTEEDPFKPD, and LPSP…GQKR. Serine 384 carries the post-translational modification Phosphoserine. Residues 412-422 are compositionally biased toward basic and acidic residues; the sequence is LRLEVKREVRR. Over residues 429-450 the composition is skewed to acidic residues; sequence QEEEDEEEEEEEEEEEKEEEEE. Serine 524 carries the phosphoserine modification. A compositionally biased stretch (basic and acidic residues) spans 614-623; it reads PTEEDPFKPD. Serine 638 carries the post-translational modification Phosphoserine. An HCFC1-binding-motif (HBM) motif is present at residues 691-694; it reads DHDY. Disordered stretches follow at residues 717–758 and 779–867; these read VHLE…LRDH and DLAS…WSPA. Residues 793 to 805 are compositionally biased toward low complexity; it reads EDSSSSSGESSFL. Residues 806–825 show a composition bias toward acidic residues; that stretch reads PEEEEEEGEEEEEDDEEEDS. A compositionally biased stretch (low complexity) spans 849 to 866; that stretch reads CSRSRSSSGSSPCHSWSP. The region spanning 902 to 976 is the RRM domain; it reads RVVYIQNLSS…RNEPSFQLSY (75 aa).

In terms of assembly, interacts with hepatocyte nuclear factor 4-alpha/HNF4A, Sterol regulatory binding transcription factor 1/SREBF1, PPAR-alpha/PPARA, thyroid hormone receptor beta/THRB and host cell factor/HCFC1. Interacts with estrogen-related receptor gamma/ESRRG and alpha/ESRRA. Interacts with PRDM16. Interacts with estrogen receptor alpha/ESR1. In terms of tissue distribution, ubiquitous with higher expression in heart, brain and skeletal muscle.

Its subcellular location is the nucleus. In terms of biological role, plays a role of stimulator of transcription factors and nuclear receptors activities. Activates transcriptional activity of estrogen receptor alpha, nuclear respiratory factor 1 (NRF1) and glucocorticoid receptor in the presence of glucocorticoids. May play a role in constitutive non-adrenergic-mediated mitochondrial biogenesis as suggested by increased basal oxygen consumption and mitochondrial number when overexpressed. May be involved in fat oxidation and non-oxidative glucose metabolism and in the regulation of energy expenditure. Induces the expression of PERM1 in the skeletal muscle in an ESRRA-dependent manner. The protein is Peroxisome proliferator-activated receptor gamma coactivator 1-beta (PPARGC1B) of Homo sapiens (Human).